Reading from the N-terminus, the 293-residue chain is Hydroxyquinol 1,2-dioxygenase (293 aa).

Positions 164, 197, 221, and 223 each coordinate Fe cation.

Belongs to the intradiol ring-cleavage dioxygenase family. In terms of assembly, homodimer. Fe(3+) is required as a cofactor.

The enzyme catalyses benzene-1,2,4-triol + O2 = maleylacetate + 2 H(+). It functions in the pathway aromatic compound metabolism; beta-ketoadipate pathway; 3-oxoadipate from 3,4-dihydroxybenzoate: step 2/4. Inhibited by 3,5-dichlorocatechol, chlorohydroquinone and 4,5-dibromocatechol. In terms of biological role, catalyzes the ortho-cleavage of the aromatic ring of hydroxyquinol. In Nocardioides simplex (Arthrobacter simplex), this protein is Hydroxyquinol 1,2-dioxygenase (chqB).